A 748-amino-acid polypeptide reads, in one-letter code: Catalase-peroxidase (748 aa).

Residues 96-229 (WHSAGTYRVA…LAAAHMGLIY (134 aa)) constitute a cross-link (tryptophyl-tyrosyl-methioninium (Trp-Tyr) (with M-255)). Residue His97 is the Proton acceptor of the active site. Residues 229 to 255 (YVNPEGPDGNPDPIAAAKDIRTTFGRM) constitute a cross-link (tryptophyl-tyrosyl-methioninium (Tyr-Met) (with W-96)). His270 lines the heme b pocket.

Belongs to the peroxidase family. Peroxidase/catalase subfamily. As to quaternary structure, homodimer or homotetramer. The cofactor is heme b. In terms of processing, formation of the three residue Trp-Tyr-Met cross-link is important for the catalase, but not the peroxidase activity of the enzyme.

It localises to the cytoplasm. The catalysed reaction is H2O2 + AH2 = A + 2 H2O. It carries out the reaction 2 H2O2 = O2 + 2 H2O. Its function is as follows. Bifunctional enzyme with both catalase and broad-spectrum peroxidase activity. Plays a crucial role in oxidative stress response during infection. Acts as an antigen and elicits antibody response in P.marneffei-infected AIDS patients, healthy people working in mycological laboratory, and healthy people in an endemic area. This chain is Catalase-peroxidase, found in Talaromyces marneffei (Penicillium marneffei).